A 104-amino-acid polypeptide reads, in one-letter code: Large ribosomal subunit protein uL15z (104 aa).

Belongs to the universal ribosomal protein uL15 family.

The sequence is that of Large ribosomal subunit protein uL15z (RPL27AA) from Arabidopsis thaliana (Mouse-ear cress).